Consider the following 422-residue polypeptide: Histidine--tRNA ligase (422 aa).

Belongs to the class-II aminoacyl-tRNA synthetase family. As to quaternary structure, homodimer.

It is found in the cytoplasm. The enzyme catalyses tRNA(His) + L-histidine + ATP = L-histidyl-tRNA(His) + AMP + diphosphate + H(+). The chain is Histidine--tRNA ligase (hisS) from Photobacterium profundum (strain SS9).